A 421-amino-acid chain; its full sequence is Cyclin-A1 (421 aa).

Positions 1–21 (MHRQSSKSGVALPPVGQGPDA) are disordered.

This sequence belongs to the cyclin family. Cyclin AB subfamily. Interacts with INCA1 and KLHDC9. Interacts with the CDK2 and CDC2 protein kinases to form a serine/threonine kinase holoenzyme complex. The cyclin subunit imparts substrate specificity to the complex. Found in a complex with CDK2, CABLES1 and CCNE1. Post-translationally, polyubiquitinated via 'Lys-11'-linked ubiquitin by the anaphase-promoting complex (APC/C), leading to its degradation by the proteasome. Deubiquitinated and stabilized by USP37 enables entry into S phase. Ubiquitinated during the G1 phase by the SCF(FBXO31) complex, leading to its proteasomal degradation. As to expression, testis and ovaries.

Its subcellular location is the nucleus. It localises to the cytoplasm. It is found in the cytoskeleton. The protein resides in the spindle. Its function is as follows. May be involved in the control of the cell cycle at the G1/S (start) and G2/M (mitosis) transitions. May primarily function in the control of the germline meiotic cell cycle and additionally in the control of mitotic cell cycle in some somatic cells. This is Cyclin-A1 (Ccna1) from Mus musculus (Mouse).